The primary structure comprises 211 residues: MPDDFKIPRATLKRLPLYYRFVSILKGKGIDRVNSKTISEALQIDSATIRRDFSYFGELGKKGYGYNIDSMLEFFKSELSESDQIKIAIIGIGNLGRALLTYNFSIHDEMTITEAFDIRPDIIGENIGDVVVKHSDDIKTTLESEDIDVVILTTPDNVAQQVADELVKAGVKGILNFTPRRIKTPQDVQVHHIDFGIELQSLLFFMKNYSK.

The segment at residues 17 to 56 (LYYRFVSILKGKGIDRVNSKTISEALQIDSATIRRDFSYF) is a DNA-binding region (H-T-H motif). 91 to 96 (GIGNLG) serves as a coordination point for NAD(+).

Belongs to the transcriptional regulatory Rex family. In terms of assembly, homodimer.

It localises to the cytoplasm. Its function is as follows. Modulates transcription in response to changes in cellular NADH/NAD(+) redox state. This chain is Redox-sensing transcriptional repressor Rex, found in Staphylococcus epidermidis (strain ATCC 35984 / DSM 28319 / BCRC 17069 / CCUG 31568 / BM 3577 / RP62A).